Reading from the N-terminus, the 147-residue chain is MASFRLLLLCLAGLVFVSEASPAGAGESKCPLMVKVLDAVRGSPAANVGVKVFKKAADETWEPFASGKTSDSGELHGLTTEDKFVEGLYKVELDTKSYWKSLGISPFHEYAEVVFTANDSGLRHYTIAALLSPYSYSTTALVSSPKE.

An N-terminal signal peptide occupies residues 1-20 (MASFRLLLLCLAGLVFVSEA). The residue at position 30 (Cys-30) is a Sulfocysteine. Lys-35 serves as a coordination point for L-thyroxine. A 4-carboxyglutamate modification is found at Glu-62. A Phosphoserine modification is found at Ser-72. Residue Glu-74 participates in L-thyroxine binding. N-linked (GlcNAc...) asparagine glycosylation occurs at Asn-118. An L-thyroxine-binding site is contributed by Ser-137.

It belongs to the transthyretin family. As to quaternary structure, homotetramer. Dimer of dimers. In the homotetramer, subunits assemble around a central channel that can accommodate two ligand molecules. Interacts with RBP4. Post-translationally, sulfonation of the reactive cysteine Cys-30 enhances the stability of the native conformation of TTR, avoiding misassembly of the protein leading to amyloid formation. Highly expressed in the choroid plexus.

The protein localises to the secreted. Functionally, thyroid hormone-binding protein. Probably transports thyroxine from the bloodstream to the brain. The protein is Transthyretin (TTR) of Ovis aries (Sheep).